Here is a 260-residue protein sequence, read N- to C-terminus: Ribosomal RNA small subunit methyltransferase G (260 aa).

Residues Gly-111, Phe-116, and Arg-181 each coordinate S-adenosyl-L-methionine.

Belongs to the methyltransferase superfamily. RNA methyltransferase RsmG family.

The protein localises to the cytoplasm. The catalysed reaction is guanosine(527) in 16S rRNA + S-adenosyl-L-methionine = N(7)-methylguanosine(527) in 16S rRNA + S-adenosyl-L-homocysteine. Specifically methylates the N7 position of guanine in position 527 of 16S rRNA. The sequence is that of Ribosomal RNA small subunit methyltransferase G from Nitrobacter hamburgensis (strain DSM 10229 / NCIMB 13809 / X14).